The primary structure comprises 298 residues: PYK10-binding protein 1 (298 aa).

Alanine 2 carries the post-translational modification N-acetylalanine. 2 Jacalin-type lectin domains span residues 2-142 (AQKV…YFAP) and 152-295 (AKQL…HVRP). Serine 20 bears the Phosphoserine mark.

It belongs to the jacalin lectin family. Component of the PYK10 complex, at least composed of PYK10/BGLU23, BGLU21, BGLU22, JAL22, JAL23, PBP1/JAL30, PBP2/JAL31, JAL32, JAL33, JAL34, JAL35, GLL22 and GLL23. In terms of tissue distribution, expressed exclusively in roots.

It localises to the cytoplasm. Inhibitor-type lectin that may regulate the correct polymerization of BGLU23/PYK10 upon tissue damage. Activates BGLU21, BGLU22 and BGLU23. The protein is PYK10-binding protein 1 (PBP1) of Arabidopsis thaliana (Mouse-ear cress).